A 409-amino-acid polypeptide reads, in one-letter code: MSKKVEKVVLAYSGGLDTSIILKWLQTTYGAEVVTFTADLGQGEELEPARQKALLLGIKPENIFIEDLREEFVRDYVFPMFRANAVYEGQYLLGTSIARPLIAKKQIEIAEKVGADAVSHGATGKGNDQVRFELGYYALKPDITIIAPWREWDFKSREKLIAFAEQHQIPIAKDKRGEAPFSVDANLLHASSEGKVLEDPAQEVPDYVYSRTIDPQAAPDQPTYITIDFEKGDAVAIDGRTMSPATLLAKLNELGRANGIGRLDLVENRFVGMKSRGMYETPGGTILLVAHRGIEQITLDRGAAHLKDELMPKYAELIYNGFWFAPEREMLQAAIDHSQQYVSGQVRLKLYKGNVILVGRDSRYSLYDQDLVTFEEGAVAYDHRDAAGFIKLNALRLRTLGQRKKKLGL.

ATP contacts are provided by residues A11–S19 and A38. 2 residues coordinate L-citrulline: Y91 and S96. G121 lines the ATP pocket. 3 residues coordinate L-aspartate: T123, N127, and D128. N127 is a binding site for L-citrulline. Positions 131, 182, 191, 267, and 279 each coordinate L-citrulline.

It belongs to the argininosuccinate synthase family. Type 1 subfamily. In terms of assembly, homotetramer.

The protein localises to the cytoplasm. It catalyses the reaction L-citrulline + L-aspartate + ATP = 2-(N(omega)-L-arginino)succinate + AMP + diphosphate + H(+). It functions in the pathway amino-acid biosynthesis; L-arginine biosynthesis; L-arginine from L-ornithine and carbamoyl phosphate: step 2/3. This chain is Argininosuccinate synthase, found in Nitrobacter hamburgensis (strain DSM 10229 / NCIMB 13809 / X14).